The primary structure comprises 477 residues: Ribulose bisphosphate carboxylase large chain (477 aa).

Positions 1–2 (MS) are excised as a propeptide. Pro3 is modified (N-acetylproline). The substrate site is built by Asn123 and Thr173. Lys175 functions as the Proton acceptor in the catalytic mechanism. Substrate is bound at residue Lys177. 3 residues coordinate Mg(2+): Lys201, Asp203, and Glu204. Lys201 carries the post-translational modification N6-carboxylysine. His294 (proton acceptor) is an active-site residue. Arg295, His327, and Ser379 together coordinate substrate.

The protein belongs to the RuBisCO large chain family. Type I subfamily. As to quaternary structure, heterohexadecamer of 8 large chains and 8 small chains; disulfide-linked. The disulfide link is formed within the large subunit homodimers. The cofactor is Mg(2+). In terms of processing, the disulfide bond which can form in the large chain dimeric partners within the hexadecamer appears to be associated with oxidative stress and protein turnover.

It localises to the plastid. Its subcellular location is the chloroplast. The enzyme catalyses 2 (2R)-3-phosphoglycerate + 2 H(+) = D-ribulose 1,5-bisphosphate + CO2 + H2O. It carries out the reaction D-ribulose 1,5-bisphosphate + O2 = 2-phosphoglycolate + (2R)-3-phosphoglycerate + 2 H(+). Its function is as follows. RuBisCO catalyzes two reactions: the carboxylation of D-ribulose 1,5-bisphosphate, the primary event in carbon dioxide fixation, as well as the oxidative fragmentation of the pentose substrate in the photorespiration process. Both reactions occur simultaneously and in competition at the same active site. The protein is Ribulose bisphosphate carboxylase large chain of Lolium perenne (Perennial ryegrass).